The following is a 66-amino-acid chain: Prokaryotic ubiquitin-like protein UBact (66 aa).

The segment at 1 to 66 (MNMRYTLMPE…AERYRQRTGE (66 aa)) is disordered. A compositionally biased stretch (basic and acidic residues) spans 30–66 (GGPRRPETGSPDKDNLLKRMRKVDPKQAERYRQRTGE). An Isoglutamyl lysine isopeptide (Glu-Lys) (interchain with K-? in acceptor proteins) cross-link involves residue glutamate 66.

It belongs to the ubiquitin-like protein UBact family.

May function as a protein modifier covalently attached to lysine residues of substrate proteins. This may serve to target the modified proteins for degradation by proteasomes. In Nitrospira moscoviensis, this protein is Prokaryotic ubiquitin-like protein UBact.